The sequence spans 123 residues: Transmembrane protein 049L (123 aa).

Transmembrane regions (helical) follow at residues 67 to 87 and 104 to 121; these read VFGA…LWLV and LSLQ…GVYN.

It is found in the membrane. This chain is Transmembrane protein 049L, found in Acheta domesticus (House cricket).